The sequence spans 395 residues: MTVPATSTRKDLMIVNMGPHHPSMHGVLRLIVTLDGEDVIDCEPILGYLHRGMEKIAENRTIIQYLPYVTRWDYLATMFTEAITVNAPEQLGNIQVPKRASYIRVIMLELSRIASHLLWLGPFMADIGAQTPFFYIFRERELLYDLFEAATGMRMMHNYFRIGGVAADLPHGWVDKCLDFCDYFLTGVAEYQKLITRNPIFLERVEGVGIIGGEEAINWGLSGPMLRASGIRWDLRKVDHYECYDEFDWEVQWQKEGDSLARYLVRISEMTESIKIIQQALEGIPGGPYENLEVRRFDRARDAEWNDFDYRFISKKPSPTFELSKQELYARVEAPKGELGIFLIGDNSVFPWRWKIRPPGFINLQILPQLVKRMKLADIMTILGSIDIIMGEVDR.

It belongs to the complex I 49 kDa subunit family. In terms of assembly, NDH is composed of at least 16 different subunits, 5 of which are encoded in the nucleus.

It localises to the plastid. The protein localises to the chloroplast thylakoid membrane. It carries out the reaction a plastoquinone + NADH + (n+1) H(+)(in) = a plastoquinol + NAD(+) + n H(+)(out). The enzyme catalyses a plastoquinone + NADPH + (n+1) H(+)(in) = a plastoquinol + NADP(+) + n H(+)(out). In terms of biological role, NDH shuttles electrons from NAD(P)H:plastoquinone, via FMN and iron-sulfur (Fe-S) centers, to quinones in the photosynthetic chain and possibly in a chloroplast respiratory chain. The immediate electron acceptor for the enzyme in this species is believed to be plastoquinone. Couples the redox reaction to proton translocation, and thus conserves the redox energy in a proton gradient. This is NAD(P)H-quinone oxidoreductase subunit H, chloroplastic from Chloranthus spicatus (Chulantree).